Reading from the N-terminus, the 491-residue chain is Protein nucleotidyltransferase YdiU (491 aa).

Positions 94, 96, 97, 117, 129, 130, 180, and 187 each coordinate ATP. Catalysis depends on D256, which acts as the Proton acceptor. The Mg(2+) site is built by N257 and D266. D266 provides a ligand contact to ATP.

Belongs to the SELO family. The cofactor is Mg(2+). Mn(2+) serves as cofactor.

The enzyme catalyses L-seryl-[protein] + ATP = 3-O-(5'-adenylyl)-L-seryl-[protein] + diphosphate. The catalysed reaction is L-threonyl-[protein] + ATP = 3-O-(5'-adenylyl)-L-threonyl-[protein] + diphosphate. It carries out the reaction L-tyrosyl-[protein] + ATP = O-(5'-adenylyl)-L-tyrosyl-[protein] + diphosphate. It catalyses the reaction L-histidyl-[protein] + UTP = N(tele)-(5'-uridylyl)-L-histidyl-[protein] + diphosphate. The enzyme catalyses L-seryl-[protein] + UTP = O-(5'-uridylyl)-L-seryl-[protein] + diphosphate. The catalysed reaction is L-tyrosyl-[protein] + UTP = O-(5'-uridylyl)-L-tyrosyl-[protein] + diphosphate. Nucleotidyltransferase involved in the post-translational modification of proteins. It can catalyze the addition of adenosine monophosphate (AMP) or uridine monophosphate (UMP) to a protein, resulting in modifications known as AMPylation and UMPylation. In Clostridium botulinum (strain ATCC 19397 / Type A), this protein is Protein nucleotidyltransferase YdiU.